A 144-amino-acid polypeptide reads, in one-letter code: Probable disulfide formation protein (144 aa).

The helical transmembrane segment at 10–29 (WNLLLLTWLVALISTLSALF) threads the bilayer. Residues cysteine 39 and cysteine 42 are joined by a disulfide bond. The next 2 membrane-spanning stretches (helical) occupy residues 44–63 (FQRAFMFPLTVILAIACYRS) and 70–87 (YALPLTVIGAALAFVHTL). Cysteine 100 and cysteine 107 are joined by a disulfide. The helical transmembrane segment at 116 to 138 (GVVPLPALALFAFIIIAILLIII) threads the bilayer.

It belongs to the DsbB family. BdbC subfamily.

The protein resides in the cell inner membrane. In terms of biological role, required for disulfide bond formation in some proteins. This chain is Probable disulfide formation protein, found in Metapseudomonas resinovorans (Pseudomonas resinovorans).